Consider the following 441-residue polypeptide: Glutamate--tRNA ligase 1 (441 aa).

The 'HIGH' region motif lies at 8-18 (PSPTGHIHVGN). A 'KMSKS' region motif is present at residues 239–243 (ELSKR). ATP is bound at residue Lys242.

The protein belongs to the class-I aminoacyl-tRNA synthetase family. Glutamate--tRNA ligase type 1 subfamily. In terms of assembly, monomer.

Its subcellular location is the cytoplasm. It catalyses the reaction tRNA(Glu) + L-glutamate + ATP = L-glutamyl-tRNA(Glu) + AMP + diphosphate. Its function is as follows. Catalyzes the attachment of glutamate to tRNA(Glu) in a two-step reaction: glutamate is first activated by ATP to form Glu-AMP and then transferred to the acceptor end of tRNA(Glu). The sequence is that of Glutamate--tRNA ligase 1 from Paracoccus denitrificans (strain Pd 1222).